We begin with the raw amino-acid sequence, 226 residues long: Large ribosomal subunit protein uL1 (226 aa).

Belongs to the universal ribosomal protein uL1 family. Part of the 50S ribosomal subunit.

Its function is as follows. Binds directly to 23S rRNA. The L1 stalk is quite mobile in the ribosome, and is involved in E site tRNA release. Functionally, protein L1 is also a translational repressor protein, it controls the translation of the L11 operon by binding to its mRNA. The sequence is that of Large ribosomal subunit protein uL1 from Mycoplasmoides gallisepticum (strain R(low / passage 15 / clone 2)) (Mycoplasma gallisepticum).